Consider the following 275-residue polypeptide: PE family protein PE8 (275 aa).

One can recognise a PE domain in the interval 5–93 (KTVPEELTAA…AGTYGVTESL (89 aa)).

Belongs to the mycobacterial PE family. In terms of assembly, forms a heterodimer with PPE15. The dimer forms a 1:1:1 heterotrimeric complex with EspG5.

Its subcellular location is the secreted. It localises to the cell wall. In terms of biological role, promotes the intracellular survival of recombinant Mycobacterium within macrophages by regulating host inflammatory cytokines production and inhibiting cell late apoptosis. The polypeptide is PE family protein PE8 (Mycobacterium tuberculosis (strain ATCC 25618 / H37Rv)).